The primary structure comprises 93 residues: C-C motif chemokine 3 (93 aa).

The signal sequence occupies residues 1–24 (MKVAVAALAVLLCAMALCSQVFSA). 2 disulfides stabilise this stretch: Cys34-Cys58 and Cys35-Cys74.

The protein belongs to the intercrine beta (chemokine CC) family. Self-associates. Also heterodimer of MIP-1-alpha(4-69) and MIP-1-beta(3-69). Interacts with CCR1.

It is found in the secreted. Functionally, monokine with inflammatory and chemokinetic properties. Binds to CCR1, CCR4 and CCR5. One of the major HIV-suppressive factors produced by CD8+ T-cells. Recombinant MIP-1-alpha induces a dose-dependent inhibition of different strains of HIV-1, HIV-2, and simian immunodeficiency virus (SIV). The chain is C-C motif chemokine 3 (CCL3) from Bos taurus (Bovine).